Consider the following 293-residue polypeptide: Inner membrane ABC transporter permease protein YcjO (293 aa).

Residues Met1–Pro12 are Periplasmic-facing. Residues Phe13 to Met33 traverse the membrane as a helical segment. Residues Val34–Val77 are Cytoplasmic-facing. The ABC transmembrane type-1 domain occupies Leu73–Thr283. Residues Trp78–Phe98 traverse the membrane as a helical segment. Residues Asn99–Ser110 are Periplasmic-facing. A helical membrane pass occupies residues Leu111–Phe131. At Asn132 to Tyr135 the chain is on the cytoplasmic side. The helical transmembrane segment at Gly136 to Phe156 threads the bilayer. Over Asp157–Ser162 the chain is Periplasmic. The helical transmembrane segment at Phe163–Leu183 threads the bilayer. Residues Ala184–Pro214 lie on the Cytoplasmic side of the membrane. Residues Ala215–Phe235 form a helical membrane-spanning segment. Residues Ala236–Asp261 lie on the Periplasmic side of the membrane. A helical membrane pass occupies residues Leu262–Leu282. At Thr283–Lys293 the chain is on the cytoplasmic side.

The protein belongs to the binding-protein-dependent transport system permease family. MalFG subfamily.

The protein resides in the cell inner membrane. Its function is as follows. Probably part of the binding-protein-dependent transport system YcjNOP. Probably responsible for the translocation of the substrate across the membrane. The sequence is that of Inner membrane ABC transporter permease protein YcjO (ycjO) from Escherichia coli (strain K12).